The chain runs to 557 residues: Aspartate--tRNA ligase, cytoplasmic (557 aa).

Positions Met1–Glu12 are enriched in basic and acidic residues. The disordered stretch occupies residues Met1–Asn74. At Ser2 the chain carries N-acetylserine. Phosphoserine is present on Ser14. The segment covering Leu37–Asn74 has biased composition (basic and acidic residues). Glu281 is an L-aspartate binding site. A Phosphoserine modification is found at Ser301. Residues Gln303–Lys306 form an aspartate region. An L-aspartate-binding site is contributed by Arg325. Residues Arg325–Glu327, Arg333–Met335, and Glu478 contribute to the ATP site. L-aspartate-binding residues include Ser481 and Arg485. Ser502 is subject to Phosphoserine. Residue Gly528 to Arg531 coordinates ATP. Ser546 carries the phosphoserine modification.

It belongs to the class-II aminoacyl-tRNA synthetase family. Type 2 subfamily. Homodimer.

The protein localises to the cytoplasm. The enzyme catalyses tRNA(Asp) + L-aspartate + ATP = L-aspartyl-tRNA(Asp) + AMP + diphosphate. The protein is Aspartate--tRNA ligase, cytoplasmic (DPS1) of Saccharomyces cerevisiae (strain ATCC 204508 / S288c) (Baker's yeast).